Here is a 275-residue protein sequence, read N- to C-terminus: Large ribosomal subunit protein uL2 (275 aa).

A disordered region spans residues 223-275 (VAMNPVDHPHGGGEGRTSGGRHPVTPWGVPTKGYKTRSNKRTDKYIVRRRNKK).

Belongs to the universal ribosomal protein uL2 family. In terms of assembly, part of the 50S ribosomal subunit. Forms a bridge to the 30S subunit in the 70S ribosome.

Functionally, one of the primary rRNA binding proteins. Required for association of the 30S and 50S subunits to form the 70S ribosome, for tRNA binding and peptide bond formation. It has been suggested to have peptidyltransferase activity; this is somewhat controversial. Makes several contacts with the 16S rRNA in the 70S ribosome. The sequence is that of Large ribosomal subunit protein uL2 from Shewanella loihica (strain ATCC BAA-1088 / PV-4).